We begin with the raw amino-acid sequence, 95 residues long: UPF0358 protein BT9727_3692 (95 aa).

It belongs to the UPF0358 family.

The protein is UPF0358 protein BT9727_3692 of Bacillus thuringiensis subsp. konkukian (strain 97-27).